The primary structure comprises 77 residues: Delta-conotoxin GmVIA (77 aa).

The N-terminal stretch at 1-22 (MKLTCMMIVAVLFLTAWTFVTA) is a signal peptide. Residues 23–48 (DDSGNGMEILFPKAGHEMENLEVSNR) constitute a propeptide that is removed on maturation. Intrachain disulfides connect Cys-52–Cys-67, Cys-59–Cys-72, and Cys-66–Cys-76.

This sequence belongs to the conotoxin O1 superfamily. Expressed by the venom duct.

The protein resides in the secreted. Delta-conotoxins bind to site 6 of voltage-gated sodium channels (Nav) and inhibit the inactivation process. This toxin shows weak activity on rNav1.2/SCN2A (EC(50)=2.5 uM) and rNav1.4/SCN4A (EC(50)=4.8 uM). In vivo, injection of this peptide in the head region of garden snail induces retraction of the head and body into shell. This is followed by secretion of viscous green slime and a convulsive undulation into and out of the shell. No apparent biological activity was observed when a much greater dose of peptide was injected intraperitoneally into mice. The polypeptide is Delta-conotoxin GmVIA (Conus gloriamaris (Glory-of-the-Sea cone)).